The primary structure comprises 417 residues: Tryptophan synthase beta chain (417 aa).

At Lys110 the chain carries N6-(pyridoxal phosphate)lysine.

It belongs to the TrpB family. Tetramer of two alpha and two beta chains. It depends on pyridoxal 5'-phosphate as a cofactor.

The catalysed reaction is (1S,2R)-1-C-(indol-3-yl)glycerol 3-phosphate + L-serine = D-glyceraldehyde 3-phosphate + L-tryptophan + H2O. The protein operates within amino-acid biosynthesis; L-tryptophan biosynthesis; L-tryptophan from chorismate: step 5/5. Its function is as follows. The beta subunit is responsible for the synthesis of L-tryptophan from indole and L-serine. The sequence is that of Tryptophan synthase beta chain from Prochlorococcus marinus (strain NATL2A).